The primary structure comprises 161 residues: ATP synthase subunit b (161 aa).

A helical transmembrane segment spans residues 12 to 32 (IAFFLFVFFCMKYIWPNLISL).

This sequence belongs to the ATPase B chain family. As to quaternary structure, F-type ATPases have 2 components, F(1) - the catalytic core - and F(0) - the membrane proton channel. F(1) has five subunits: alpha(3), beta(3), gamma(1), delta(1), epsilon(1). F(0) has three main subunits: a(1), b(2) and c(10-14). The alpha and beta chains form an alternating ring which encloses part of the gamma chain. F(1) is attached to F(0) by a central stalk formed by the gamma and epsilon chains, while a peripheral stalk is formed by the delta and b chains.

The protein localises to the cell membrane. Functionally, f(1)F(0) ATP synthase produces ATP from ADP in the presence of a proton or sodium gradient. F-type ATPases consist of two structural domains, F(1) containing the extramembraneous catalytic core and F(0) containing the membrane proton channel, linked together by a central stalk and a peripheral stalk. During catalysis, ATP synthesis in the catalytic domain of F(1) is coupled via a rotary mechanism of the central stalk subunits to proton translocation. Its function is as follows. Component of the F(0) channel, it forms part of the peripheral stalk, linking F(1) to F(0). The chain is ATP synthase subunit b from Wigglesworthia glossinidia brevipalpis.